Here is a 320-residue protein sequence, read N- to C-terminus: Undecaprenyl-diphosphatase (320 aa).

8 helical membrane-spanning segments follow: residues F9–F29, G82–W102, L130–I150, L161–L181, L191–V211, F236–A256, L265–L285, and V296–I316.

The protein belongs to the UppP family.

The protein localises to the cell inner membrane. It catalyses the reaction di-trans,octa-cis-undecaprenyl diphosphate + H2O = di-trans,octa-cis-undecaprenyl phosphate + phosphate + H(+). In terms of biological role, catalyzes the dephosphorylation of undecaprenyl diphosphate (UPP). Confers resistance to bacitracin. The sequence is that of Undecaprenyl-diphosphatase from Trichormus variabilis (strain ATCC 29413 / PCC 7937) (Anabaena variabilis).